The primary structure comprises 461 residues: Fumarate hydratase class II (461 aa).

Substrate-binding positions include S99–T101, H130–D133, S140–N142, and T188. Catalysis depends on H189, which acts as the Proton donor/acceptor. S319 is a catalytic residue. Residues S320 and K325–N327 each bind substrate.

It belongs to the class-II fumarase/aspartase family. Fumarase subfamily. As to quaternary structure, homotetramer.

The protein localises to the cytoplasm. It carries out the reaction (S)-malate = fumarate + H2O. It functions in the pathway carbohydrate metabolism; tricarboxylic acid cycle; (S)-malate from fumarate: step 1/1. Functionally, involved in the TCA cycle. Catalyzes the stereospecific interconversion of fumarate to L-malate. The protein is Fumarate hydratase class II of Prochlorococcus marinus subsp. pastoris (strain CCMP1986 / NIES-2087 / MED4).